Reading from the N-terminus, the 308-residue chain is Methionyl-tRNA formyltransferase (308 aa).

109-112 (SLLP) lines the (6S)-5,6,7,8-tetrahydrofolate pocket.

Belongs to the Fmt family.

It catalyses the reaction L-methionyl-tRNA(fMet) + (6R)-10-formyltetrahydrofolate = N-formyl-L-methionyl-tRNA(fMet) + (6S)-5,6,7,8-tetrahydrofolate + H(+). In terms of biological role, attaches a formyl group to the free amino group of methionyl-tRNA(fMet). The formyl group appears to play a dual role in the initiator identity of N-formylmethionyl-tRNA by promoting its recognition by IF2 and preventing the misappropriation of this tRNA by the elongation apparatus. The chain is Methionyl-tRNA formyltransferase from Salinispora tropica (strain ATCC BAA-916 / DSM 44818 / JCM 13857 / NBRC 105044 / CNB-440).